Here is a 172-residue protein sequence, read N- to C-terminus: Crossover junction endodeoxyribonuclease RuvC (172 aa).

Active-site residues include Asp7, Glu68, and Asp140. Positions 7, 68, and 140 each coordinate Mg(2+).

This sequence belongs to the RuvC family. As to quaternary structure, homodimer which binds Holliday junction (HJ) DNA. The HJ becomes 2-fold symmetrical on binding to RuvC with unstacked arms; it has a different conformation from HJ DNA in complex with RuvA. In the full resolvosome a probable DNA-RuvA(4)-RuvB(12)-RuvC(2) complex forms which resolves the HJ. The cofactor is Mg(2+).

The protein resides in the cytoplasm. It catalyses the reaction Endonucleolytic cleavage at a junction such as a reciprocal single-stranded crossover between two homologous DNA duplexes (Holliday junction).. Its function is as follows. The RuvA-RuvB-RuvC complex processes Holliday junction (HJ) DNA during genetic recombination and DNA repair. Endonuclease that resolves HJ intermediates. Cleaves cruciform DNA by making single-stranded nicks across the HJ at symmetrical positions within the homologous arms, yielding a 5'-phosphate and a 3'-hydroxyl group; requires a central core of homology in the junction. The consensus cleavage sequence is 5'-(A/T)TT(C/G)-3'. Cleavage occurs on the 3'-side of the TT dinucleotide at the point of strand exchange. HJ branch migration catalyzed by RuvA-RuvB allows RuvC to scan DNA until it finds its consensus sequence, where it cleaves and resolves the cruciform DNA. The chain is Crossover junction endodeoxyribonuclease RuvC from Polynucleobacter asymbioticus (strain DSM 18221 / CIP 109841 / QLW-P1DMWA-1) (Polynucleobacter necessarius subsp. asymbioticus).